A 153-amino-acid chain; its full sequence is Calmodulin-like protein 3 (153 aa).

EF-hand domains lie at 1 to 36 (MDQA…LGIY), 37 to 72 (IPDK…IMEE), 74 to 109 (DEEE…LGLK), and 112 to 147 (RTLE…GGFA). Asp14, Asn16, Asp18, Lys20, Glu25, Asp50, Asn52, Asp54, Tyr56, Glu61, Asp87, Asn89, Asp91, Glu98, Asp125, Asp127, Asp129, Met131, and Glu136 together coordinate Ca(2+).

Belongs to the calmodulin family.

Its function is as follows. Potential calcium sensor. This chain is Calmodulin-like protein 3 (CML3), found in Arabidopsis thaliana (Mouse-ear cress).